We begin with the raw amino-acid sequence, 145 residues long: D-aminoacyl-tRNA deacylase (145 aa).

Residues 137-138 carry the Gly-cisPro motif, important for rejection of L-amino acids motif; that stretch reads GP.

This sequence belongs to the DTD family. In terms of assembly, homodimer.

Its subcellular location is the cytoplasm. It carries out the reaction glycyl-tRNA(Ala) + H2O = tRNA(Ala) + glycine + H(+). The catalysed reaction is a D-aminoacyl-tRNA + H2O = a tRNA + a D-alpha-amino acid + H(+). In terms of biological role, an aminoacyl-tRNA editing enzyme that deacylates mischarged D-aminoacyl-tRNAs. Also deacylates mischarged glycyl-tRNA(Ala), protecting cells against glycine mischarging by AlaRS. Acts via tRNA-based rather than protein-based catalysis; rejects L-amino acids rather than detecting D-amino acids in the active site. By recycling D-aminoacyl-tRNA to D-amino acids and free tRNA molecules, this enzyme counteracts the toxicity associated with the formation of D-aminoacyl-tRNA entities in vivo and helps enforce protein L-homochirality. This is D-aminoacyl-tRNA deacylase from Dichelobacter nodosus (strain VCS1703A).